The sequence spans 938 residues: Isoleucine--tRNA ligase (938 aa).

The 'HIGH' region motif lies at 58–68 (PYANGNIHMGH). Glu566 contacts L-isoleucyl-5'-AMP. Residues 607–611 (KMSKS) carry the 'KMSKS' region motif. Lys610 lines the ATP pocket. Positions 906, 909, 926, and 929 each coordinate Zn(2+).

This sequence belongs to the class-I aminoacyl-tRNA synthetase family. IleS type 1 subfamily. Monomer. It depends on Zn(2+) as a cofactor.

Its subcellular location is the cytoplasm. It carries out the reaction tRNA(Ile) + L-isoleucine + ATP = L-isoleucyl-tRNA(Ile) + AMP + diphosphate. Its function is as follows. Catalyzes the attachment of isoleucine to tRNA(Ile). As IleRS can inadvertently accommodate and process structurally similar amino acids such as valine, to avoid such errors it has two additional distinct tRNA(Ile)-dependent editing activities. One activity is designated as 'pretransfer' editing and involves the hydrolysis of activated Val-AMP. The other activity is designated 'posttransfer' editing and involves deacylation of mischarged Val-tRNA(Ile). The chain is Isoleucine--tRNA ligase from Nitratidesulfovibrio vulgaris (strain ATCC 29579 / DSM 644 / CCUG 34227 / NCIMB 8303 / VKM B-1760 / Hildenborough) (Desulfovibrio vulgaris).